Here is a 138-residue protein sequence, read N- to C-terminus: Small ribosomal subunit protein bS6 (138 aa).

Positions Ser-100–Asp-138 are disordered. The span at Asp-121 to Asp-131 shows a compositional bias: acidic residues.

This sequence belongs to the bacterial ribosomal protein bS6 family.

Functionally, binds together with bS18 to 16S ribosomal RNA. The protein is Small ribosomal subunit protein bS6 of Thioalkalivibrio sulfidiphilus (strain HL-EbGR7).